The primary structure comprises 190 residues: Large ribosomal subunit protein uL5 (190 aa).

Belongs to the universal ribosomal protein uL5 family. Part of the 50S ribosomal subunit; part of the 5S rRNA/L5/L18/L25 subcomplex. Contacts the 5S rRNA and the P site tRNA. Forms a bridge to the 30S subunit in the 70S ribosome.

Functionally, this is one of the proteins that bind and probably mediate the attachment of the 5S RNA into the large ribosomal subunit, where it forms part of the central protuberance. In the 70S ribosome it contacts protein S13 of the 30S subunit (bridge B1b), connecting the 2 subunits; this bridge is implicated in subunit movement. Contacts the P site tRNA; the 5S rRNA and some of its associated proteins might help stabilize positioning of ribosome-bound tRNAs. This Blochmanniella floridana protein is Large ribosomal subunit protein uL5.